The primary structure comprises 486 residues: Glutamate--tRNA ligase (486 aa).

A 'HIGH' region motif is present at residues 11–21; it reads PSPTGVVHIGN. The 'KMSKS' region signature appears at 255-259; it reads KLSKR. K258 contributes to the ATP binding site.

This sequence belongs to the class-I aminoacyl-tRNA synthetase family. Glutamate--tRNA ligase type 1 subfamily. Monomer.

The protein resides in the cytoplasm. It carries out the reaction tRNA(Glu) + L-glutamate + ATP = L-glutamyl-tRNA(Glu) + AMP + diphosphate. In terms of biological role, catalyzes the attachment of glutamate to tRNA(Glu) in a two-step reaction: glutamate is first activated by ATP to form Glu-AMP and then transferred to the acceptor end of tRNA(Glu). The protein is Glutamate--tRNA ligase of Streptococcus pneumoniae (strain CGSP14).